A 119-amino-acid chain; its full sequence is Beta-2-microglobulin (119 aa).

A signal peptide spans 1–20; the sequence is MACSVVVALLALLSLSGLEA. The Ig-like C1-type domain maps to 25–114; it reads PKIQVYSRHP…VTFSTPKTVK (90 aa). A disulfide bridge connects residues C45 and C100.

The protein belongs to the beta-2-microglobulin family. Heterodimer of an alpha chain and a beta chain. Beta-2-microglobulin is the beta-chain of major histocompatibility complex class I molecules.

The protein resides in the secreted. In terms of biological role, component of the class I major histocompatibility complex (MHC). Involved in the presentation of peptide antigens to the immune system. This Mico emiliae (Emilia's marmoset) protein is Beta-2-microglobulin (B2M).